We begin with the raw amino-acid sequence, 469 residues long: 6-phospho-beta-galactosidase (469 aa).

D-galactose 6-phosphate is bound by residues Gln-19, His-116, Asn-159, Glu-160, and Asn-297. Glu-160 acts as the Proton donor in catalysis. Glu-375 (nucleophile) is an active-site residue. The D-galactose 6-phosphate site is built by Ser-428, Trp-429, Lys-435, and Tyr-437.

It belongs to the glycosyl hydrolase 1 family.

It carries out the reaction a 6-phospho-beta-D-galactoside + H2O = D-galactose 6-phosphate + an alcohol. The protein operates within carbohydrate metabolism; lactose degradation; D-galactose 6-phosphate and beta-D-glucose from lactose 6-phosphate: step 1/1. The chain is 6-phospho-beta-galactosidase from Streptococcus equi subsp. zooepidemicus (strain H70).